A 375-amino-acid polypeptide reads, in one-letter code: CD2 homolog (375 aa).

Positions 1-16 are cleaved as a signal peptide; that stretch reads MIIILIFLIIPNIVLS. The Extracellular portion of the chain corresponds to 17-207; sequence IDYWVSFNKT…YLDFFQVASY (191 aa). 9 N-linked (GlcNAc...) asparagine; by host glycosylation sites follow: asparagine 24, asparagine 80, asparagine 105, asparagine 122, asparagine 134, asparagine 145, asparagine 168, asparagine 176, and asparagine 183. 2 disulfide bridges follow: cysteine 123/cysteine 190 and cysteine 130/cysteine 173. Residues 208 to 228 traverse the membrane as a helical segment; that stretch reads MFYMIIFIATGIIASIFISII. Topologically, residues 229 to 375 are cytoplasmic; sequence TFLSLRKRKK…ISLIHVDRII (147 aa). Residues 242–278 form a disordered region; that stretch reads EIESPSPSESNEEEQCQHDDTTSIHEPSPREPLLPKP. Positions 256–270 are enriched in basic and acidic residues; sequence QCQHDDTTSIHEPSP. Repeat copies occupy residues 305–310, 311–316, 317–322, 323–328, and 329–334. The segment at 305–334 is 5 X 6 AA tandem repeats of K-[LP]-C-[PRS]-[PS]-[PS]; it reads KLCPPPKPCPPPKPCPPPKPCPPPKPCPSS. Residues 323–350 form a disordered region; that stretch reads KPCPPPKPCPSSESCSPPESYSLPKPLP. The span at 332–346 shows a compositional bias: low complexity; that stretch reads PSSESCSPPESYSLP.

Belongs to the asfivirus CD2 homolog protein family. In terms of assembly, both glycosylated and nonglycosylated forms interact (via C-terminus) with the host AP-1 complex. In terms of processing, cleaved into two fragments of 63 kDa and 26 kDa containing respectively the glycosylated N-terminus and the nonglycosylated C-terminus. A full-length 89-kDa glycosylated form also exists.

Its subcellular location is the host membrane. It is found in the virion membrane. The protein resides in the host Golgi apparatus. In terms of biological role, may play an immunosuppressive role by inhibiting lymphocyte proliferation and subsequently facilitating viral replication and generalization of infection. Responsible for viral hemadsorption, which may help viral spread. Increases virus replication in the tick vector at the step of virus uptake or replication in the tick gut. May play a role in the host Golgi reorganization to yield viral factories. May play a role in host cell penetration. In Ornithodoros (relapsing fever ticks), this protein is CD2 homolog.